Reading from the N-terminus, the 314-residue chain is 4-hydroxy-3-methylbut-2-enyl diphosphate reductase (314 aa).

Cysteine 12 serves as a coordination point for [4Fe-4S] cluster. Residues histidine 41 and histidine 74 each coordinate (2E)-4-hydroxy-3-methylbut-2-enyl diphosphate. The dimethylallyl diphosphate site is built by histidine 41 and histidine 74. Residues histidine 41 and histidine 74 each contribute to the isopentenyl diphosphate site. Cysteine 96 serves as a coordination point for [4Fe-4S] cluster. Histidine 124 contacts (2E)-4-hydroxy-3-methylbut-2-enyl diphosphate. Residue histidine 124 coordinates dimethylallyl diphosphate. An isopentenyl diphosphate-binding site is contributed by histidine 124. Residue glutamate 126 is the Proton donor of the active site. Threonine 167 provides a ligand contact to (2E)-4-hydroxy-3-methylbut-2-enyl diphosphate. Cysteine 197 is a binding site for [4Fe-4S] cluster. The (2E)-4-hydroxy-3-methylbut-2-enyl diphosphate site is built by serine 225, serine 226, asparagine 227, and serine 269. Dimethylallyl diphosphate is bound by residues serine 225, serine 226, asparagine 227, and serine 269. Serine 225, serine 226, asparagine 227, and serine 269 together coordinate isopentenyl diphosphate.

This sequence belongs to the IspH family. Requires [4Fe-4S] cluster as cofactor.

The catalysed reaction is isopentenyl diphosphate + 2 oxidized [2Fe-2S]-[ferredoxin] + H2O = (2E)-4-hydroxy-3-methylbut-2-enyl diphosphate + 2 reduced [2Fe-2S]-[ferredoxin] + 2 H(+). The enzyme catalyses dimethylallyl diphosphate + 2 oxidized [2Fe-2S]-[ferredoxin] + H2O = (2E)-4-hydroxy-3-methylbut-2-enyl diphosphate + 2 reduced [2Fe-2S]-[ferredoxin] + 2 H(+). It functions in the pathway isoprenoid biosynthesis; dimethylallyl diphosphate biosynthesis; dimethylallyl diphosphate from (2E)-4-hydroxy-3-methylbutenyl diphosphate: step 1/1. The protein operates within isoprenoid biosynthesis; isopentenyl diphosphate biosynthesis via DXP pathway; isopentenyl diphosphate from 1-deoxy-D-xylulose 5-phosphate: step 6/6. Catalyzes the conversion of 1-hydroxy-2-methyl-2-(E)-butenyl 4-diphosphate (HMBPP) into a mixture of isopentenyl diphosphate (IPP) and dimethylallyl diphosphate (DMAPP). Acts in the terminal step of the DOXP/MEP pathway for isoprenoid precursor biosynthesis. In Haemophilus influenzae (strain 86-028NP), this protein is 4-hydroxy-3-methylbut-2-enyl diphosphate reductase.